The sequence spans 514 residues: Myocyte-specific enhancer factor 2D (514 aa).

The region spanning 3 to 57 is the MADS-box domain; it reads RKKIQIQRITDERNRQVTFTKRKFGLMKKAYELSVLCDCEIALIIFNHSNKLFQY. Residues 58 to 86 constitute a DNA-binding region (mef2-type); sequence ASTDMDKVLLKYTEYNEPHESRTNADIIE. Asp-97, Ser-98, and Ser-106 each carry phosphoserine. Residue Leu-107 is modified to Phosphothreonine. Ser-110 bears the Phosphoserine mark. Ser-121 is subject to Phosphoserine; by PKA. Residues 174–207 form a disordered region; sequence TDPRLLSPQQPALQRNSVSPGLPQRPASAGAMLG. Residue Ser-180 is modified to Phosphoserine; by MAPK7. A compositionally biased stretch (polar residues) spans 180 to 192; sequence SPQQPALQRNSVS. Ser-190 is modified (phosphoserine; by PKA). A Phosphoserine modification is found at Ser-231. The interval 244 to 269 is disordered; that stretch reads NKVIPAKSPPPPTHNTQLGAPSRKPD. N6-acetyllysine is present on Lys-245. Ser-251 carries the phosphoserine modification. The tract at residues 286–292 is beta domain; the sequence is TEDHLDL. Disordered stretches follow at residues 364–399 and 430–514; these read WQQP…QQPH and SIKS…WTLK. A compositionally biased stretch (pro residues) spans 367–396; it reads PQPPQQPQPPQPPQSQPQPPQPQPQQPPQQ. Lys-432 is subject to N6-acetyllysine; alternate. Lys-432 participates in a covalent cross-link: Glycyl lysine isopeptide (Lys-Gly) (interchain with G-Cter in SUMO); alternate. Ser-437 carries the phosphoserine modification.

This sequence belongs to the MEF2 family. In terms of assembly, forms a complex with class II HDACs in undifferentiating cells. On myogenic differentiation, HDACs are released into the cytoplasm allowing MEF2s to interact with other proteins for activation. Interacts with HDAC4 (in undifferentiating cells); the interaction translocates MEF2D to nuclear dots. Forms a heterodimer with MEF2A. Interacts with MAPK7; the interaction phosphorylates but does not activate MEF2D. Interacts with MYOG. Interacts with CCAR2 and HDAC3. Phosphorylated on Ser-437 is which is required for Lys-432 sumoylation and inhibits transcriptional activity. Phosphorylation on this residue by CDK5 is dependent on p35 and calpains. Phosphorylated by PKA at Ser-121 and Ser-190 represses transcriptional activity in embryonic and postnatal skeletal muscle, and stabilizes protein levels. No in vitro phosphorylation by PKA on Thr-20. Phosphorylated and activated by CaMK4. Post-translationally, acetylated on Lys-432 by CREBBP. Acetylated by EP300. Deacetylated by SIRT1 and HDAC3. In terms of processing, sumoylated on Lys-432 with SUMO2 but not SUMO1; which inhibits transcriptional activity and myogenic activity. Desumoylated by SENP3. Proteolytically cleaved in cerebellar granule neurons by caspase 7 following neurotoxicity. Preferentially cleaves the CDK5-mediated hyperphosphorylated form which leads to neuron apoptosis and transcriptional inactivation. Widely expressed though mainly restricted to skeletal and cardiac muscle, brain, neurons and lymphocytes. Differentially expressed depending on if isoforms contain the beta domain or not, with the total expression of the beta domain-lacking isoforms vastly exceeding that of the beta domain-containing isoforms. Isoforms containing the beta domain are expressed primarily in skeletal and cardiac muscle and in brain. Also present in lung and testis. Splicing to include the beta domain is induced in differentiating myocytes. Isoforms lacking the beta domain are expressed less abundantly in skeletal muscle, brain and lymphocytes, and are uniquely found in ovary, liver, spleen and kidney. In embryos, the beta domain-containing and beta domain-lacking isoforms are equally expressed. Also expressed cerebellar granule neurons and other regions of the CNS. Highest levels in the olfactory bulb, cortex, hippocampus, thalamus and cerebellum.

Its subcellular location is the nucleus. In terms of biological role, transcriptional activator which binds specifically to the MEF2 element, 5'-YTA[AT](4)TAR-3', found in numerous muscle-specific, growth factor- and stress-induced genes. Mediates cellular functions not only in skeletal and cardiac muscle development, but also in neuronal differentiation and survival. Plays diverse roles in the control of cell growth, survival and apoptosis via p38 MAPK signaling in muscle-specific and/or growth factor-related transcription. Plays a critical role in the regulation of neuronal apoptosis. The polypeptide is Myocyte-specific enhancer factor 2D (Mef2d) (Mus musculus (Mouse)).